The following is a 266-amino-acid chain: Putative pyruvate, phosphate dikinase regulatory protein (266 aa).

An ADP-binding site is contributed by 147-154 (GLSRTSKT).

This sequence belongs to the pyruvate, phosphate/water dikinase regulatory protein family. PDRP subfamily.

The catalysed reaction is N(tele)-phospho-L-histidyl/L-threonyl-[pyruvate, phosphate dikinase] + ADP = N(tele)-phospho-L-histidyl/O-phospho-L-threonyl-[pyruvate, phosphate dikinase] + AMP + H(+). It catalyses the reaction N(tele)-phospho-L-histidyl/O-phospho-L-threonyl-[pyruvate, phosphate dikinase] + phosphate + H(+) = N(tele)-phospho-L-histidyl/L-threonyl-[pyruvate, phosphate dikinase] + diphosphate. Bifunctional serine/threonine kinase and phosphorylase involved in the regulation of the pyruvate, phosphate dikinase (PPDK) by catalyzing its phosphorylation/dephosphorylation. The sequence is that of Putative pyruvate, phosphate dikinase regulatory protein from Clostridium perfringens (strain SM101 / Type A).